The chain runs to 265 residues: Protein Pars_0096 (265 aa).

Belongs to the CinA family.

The chain is Protein Pars_0096 from Pyrobaculum arsenaticum (strain DSM 13514 / JCM 11321 / PZ6).